The chain runs to 611 residues: MASVQQGEKQLFEKFWRGTFKAVATPRPESIIVASITARKPLPRTEPQNNPVVPAQDGPSEKLGQHLATEPLGTNSWERDKTCRELGATRGHSASHDKDLTPPPSSRGKKKKKKSTRKKRRRSSSYSPSPVKKKKKKSSKKHKRRRSFSKKRRHSSSSPKSKRRDEKRHKKQSRSRPRKSHRHRHHRCPSRSQSSESRPSSCESRHRGRSPEEGQKSRRRHSRRCSKTLCKDSPEAQSSRPPSQPLQMLGYLSARGVITGSGSAADLFTKTASPLTTSRGRSQEYDSGNDTSSPPSTQTSSARSRGQEKGSPSGGLSKSRELNSGNTSDSGNSFTTSSPQNKGAMLENLSPTSRGRESRGFQSPCLECAEVKKSSLVPSTARSSPMKGCSRSSSYASTRSSSHSSRSPNPRASPRYTQSRSTSSEKRSYSRSPSYSSKSGKRSPPSRSSRSRRSPSYSRYSPSRERDPKYSEKDSQQRERERARRRRRSYSPMRKRRRDSPSHLEARRITSARKRPIPYYRPSPSSSGSLSSTSSWYSSSSSRSASRSYSRSRSRSRSRRRSRTRTSSSSSSRSPSPGSRSRSRSRSRSRSRSRSQSRSYSSADSYSSTRR.

Disordered stretches follow at residues 38–248 (ARKP…PLQM) and 263–611 (SAAD…STRR). 2 stretches are compositionally biased toward basic residues: residues 107-123 (RGKK…RRRS) and 131-189 (VKKK…HRCP). Over residues 190–202 (SRSQSSESRPSSC) the composition is skewed to low complexity. The span at 203–216 (ESRHRGRSPEEGQK) shows a compositional bias: basic and acidic residues. The span at 217-226 (SRRRHSRRCS) shows a compositional bias: basic residues. A compositionally biased stretch (polar residues) spans 270-290 (KTASPLTTSRGRSQEYDSGND). The segment covering 291–301 (TSSPPSTQTSS) has biased composition (low complexity). Residues 322–341 (LNSGNTSDSGNSFTTSSPQN) are compositionally biased toward polar residues. Composition is skewed to low complexity over residues 390-422 (SRSS…SRST) and 430-461 (SRSP…SRYS). Basic and acidic residues predominate over residues 462–482 (PSRERDPKYSEKDSQQRERER). Basic residues predominate over residues 483 to 498 (ARRRRRSYSPMRKRRR). The segment covering 499 to 508 (DSPSHLEARR) has biased composition (basic and acidic residues). The span at 522–549 (PSPSSSGSLSSTSSWYSSSSSRSASRSY) shows a compositional bias: low complexity. Residues 550-564 (SRSRSRSRSRRRSRT) are compositionally biased toward basic residues. A compositionally biased stretch (low complexity) spans 565 to 580 (RTSSSSSSRSPSPGSR). Residues 581–595 (SRSRSRSRSRSRSRS) show a composition bias toward basic residues. Low complexity predominate over residues 596-611 (QSRSYSSADSYSSTRR).

Belongs to the nSR100 family. Phosphorylated. Specifically expressed in neuronal cells (at protein level). Expressed in the cerebellum.

Its subcellular location is the nucleus. Splicing factor specifically required for neural cell differentiation. Acts in conjunction with nPTB/PTBP2 by binding directly to its regulated target transcripts and promotes neural-specific exon inclusion in many genes that function in neural cell differentiation. Required to promote the inclusion of neural-specific exon 10 in nPTB/PTBP2, leading to increased expression of neural-specific nPTB/PTBP2. Also promotes the inclusion of exon 16 in DAAM1 in neuron extracts. Promotes alternative splicing of REST transcripts to produce REST isoform 3 (REST4) with greatly reduced repressive activity, thereby activating expression of REST targets in neural cells. Plays an important role during embryonic development as well as in the proper functioning of the adult nervous system. Regulates alternative splicing events in genes with important neuronal functions. This chain is Serine/arginine repetitive matrix protein 4 (SRRM4), found in Homo sapiens (Human).